The sequence spans 234 residues: Sugar fermentation stimulation protein homolog (234 aa).

The protein belongs to the SfsA family.

The sequence is that of Sugar fermentation stimulation protein homolog from Shewanella putrefaciens (strain CN-32 / ATCC BAA-453).